We begin with the raw amino-acid sequence, 126 residues long: Large ribosomal subunit protein bL19 (126 aa).

This sequence belongs to the bacterial ribosomal protein bL19 family.

Functionally, this protein is located at the 30S-50S ribosomal subunit interface and may play a role in the structure and function of the aminoacyl-tRNA binding site. The sequence is that of Large ribosomal subunit protein bL19 from Bradyrhizobium diazoefficiens (strain JCM 10833 / BCRC 13528 / IAM 13628 / NBRC 14792 / USDA 110).